We begin with the raw amino-acid sequence, 289 residues long: 4-hydroxybenzoate octaprenyltransferase (289 aa).

A run of 9 helical transmembrane segments spans residues 22 to 42 (AGWL…SHGF), 45 to 65 (WHLV…GCCI), 96 to 116 (LGLG…TNAV), 118 to 138 (IAWS…KRYV), 140 to 160 (MPQA…FAAV), 164 to 184 (VPPL…AYDT), 211 to 231 (VAGV…ALIQ), 236 to 256 (AIFM…GWLI), and 267 to 287 (AFRL…LSYW).

This sequence belongs to the UbiA prenyltransferase family. Mg(2+) is required as a cofactor.

The protein localises to the cell inner membrane. It carries out the reaction all-trans-octaprenyl diphosphate + 4-hydroxybenzoate = 4-hydroxy-3-(all-trans-octaprenyl)benzoate + diphosphate. It participates in cofactor biosynthesis; ubiquinone biosynthesis. Its function is as follows. Catalyzes the prenylation of para-hydroxybenzoate (PHB) with an all-trans polyprenyl group. Mediates the second step in the final reaction sequence of ubiquinone-8 (UQ-8) biosynthesis, which is the condensation of the polyisoprenoid side chain with PHB, generating the first membrane-bound Q intermediate 3-octaprenyl-4-hydroxybenzoate. The chain is 4-hydroxybenzoate octaprenyltransferase from Polaromonas naphthalenivorans (strain CJ2).